The sequence spans 334 residues: Ornithine carbamoyltransferase (334 aa).

Carbamoyl phosphate is bound by residues 56–59 (STRT), Gln83, Arg107, and 134–137 (HPTQ). Residues Asn168, Asp232, and 236-237 (SM) each bind L-ornithine. Residues 274 to 275 (CL) and Arg320 contribute to the carbamoyl phosphate site.

This sequence belongs to the aspartate/ornithine carbamoyltransferase superfamily. OTCase family.

Its subcellular location is the cytoplasm. It catalyses the reaction carbamoyl phosphate + L-ornithine = L-citrulline + phosphate + H(+). It participates in amino-acid biosynthesis; L-arginine biosynthesis; L-arginine from L-ornithine and carbamoyl phosphate: step 1/3. In terms of biological role, reversibly catalyzes the transfer of the carbamoyl group from carbamoyl phosphate (CP) to the N(epsilon) atom of ornithine (ORN) to produce L-citrulline. The polypeptide is Ornithine carbamoyltransferase (Escherichia coli O45:K1 (strain S88 / ExPEC)).